Here is a 373-residue protein sequence, read N- to C-terminus: Inhibitor of nuclear factor kappa-B kinase-interacting protein (373 aa).

Residues 1–11 (MSEVKSRKKPG) are compositionally biased toward basic residues. A disordered region spans residues 1-38 (MSEVKSRKKPGPKVAAPEPEKRSDGRKNPEARGGAGWA). Residues 18 to 30 (EPEKRSDGRKNPE) show a composition bias toward basic and acidic residues. A helical membrane pass occupies residues 43–59 (GLSLLSLATSLGLAWLV). 2 coiled-coil regions span residues 64-257 (EKFA…DKLS) and 290-325 (TERKMEELTVQMFNMEDDMLKAVSEIMEMQNTLEGI). A glycan (N-linked (GlcNAc...) asparagine) is linked at Asn151.

Post-translationally, N-glycosylated at Asn-151.

It localises to the endoplasmic reticulum membrane. Functionally, target of p53/TP53 with pro-apoptotic function. This is Inhibitor of nuclear factor kappa-B kinase-interacting protein (Ikbip) from Rattus norvegicus (Rat).